Here is a 394-residue protein sequence, read N- to C-terminus: 4-O-methyl-glucuronoyl methylesterase (394 aa).

The first 18 residues, Met1–Ala18, serve as a signal peptide directing secretion. Intrachain disulfides connect Cys29/Cys63, Cys210/Cys345, and Cys242/Cys317. The GXSYXG catalytic site motif motif lies at Gly209–Gly214. The Nucleophile role is filled by Ser211. 4 residues coordinate substrate: Lys215, Gln257, Glu265, and Trp308. The active-site Proton donor/acceptor is the His344.

The protein belongs to the carbohydrate esterase 15 (CE15) family.

The protein resides in the secreted. The catalysed reaction is a 4-O-methyl-alpha-D-glucuronosyl ester derivative + H2O = 4-O-methyl-alpha-D-glucuronate derivative + an alcohol + H(+). In terms of biological role, glucuronoyl esterase which may play a significant role in biomass degradation, as it is considered to disconnect hemicellulose from lignin through the hydrolysis of the ester bond between 4-O-methyl-D-glucuronic acid residues of glucuronoxylans and aromatic alcohols of lignin. This is 4-O-methyl-glucuronoyl methylesterase from Neurospora crassa (strain ATCC 24698 / 74-OR23-1A / CBS 708.71 / DSM 1257 / FGSC 987).